A 418-amino-acid chain; its full sequence is Secreted aspartic protease 6 (418 aa).

An N-terminal signal peptide occupies residues methionine 1 to alanine 18. A propeptide spans alanine 19–arginine 76 (activation peptide). In terms of domain architecture, Peptidase A1 spans tyrosine 90–alanine 404. Residue aspartate 108 is part of the active site. Aspartate 108 to glycine 110 contacts pepstatin A. An intrachain disulfide couples cysteine 123 to cysteine 135. N-linked (GlcNAc...) asparagine glycosylation occurs at asparagine 138. Aspartate 268 provides a ligand contact to Zn(2+). Residue aspartate 294 is part of the active site. Aspartate 294 to threonine 298 lines the pepstatin A pocket. Cysteine 332 and cysteine 370 are disulfide-bonded.

This sequence belongs to the peptidase A1 family.

The protein resides in the secreted. The catalysed reaction is Preferential cleavage at the carboxyl of hydrophobic amino acids, but fails to cleave 15-Leu-|-Tyr-16, 16-Tyr-|-Leu-17 and 24-Phe-|-Phe-25 of insulin B chain. Activates trypsinogen, and degrades keratin.. With respect to regulation, inhibited by pepstatin A analogs. Functionally, secreted aspartic peptidases (SAPs) are a group of ten acidic hydrolases considered as key virulence factors. These enzymes supply the fungus with nutrient amino acids as well as are able to degrade the selected host's proteins involved in the immune defense. Moreover, acts toward human hemoglobin though limited proteolysis to generate a variety of antimicrobial hemocidins, enabling to compete with the other microorganisms of the same physiological niche using the microbicidal peptides generated from the host protein. The polypeptide is Secreted aspartic protease 6 (Candida albicans (Yeast)).